The chain runs to 662 residues: Protein Aster-C (662 aa).

Residues 1–33 (MEGALTARQIVNEGDSSLATELQEEPEESPGPV) form a disordered region. Residues 70–176 (EYRQQFTHLP…LIIFRLWQNV (107 aa)) form the GRAM domain. The interval 212 to 294 (VEENVQPRSP…EKRISRAPSK (83 aa)) is disordered. The span at 240–250 (VSFTQESVSRA) shows a compositional bias: polar residues. Basic and acidic residues predominate over residues 265-276 (LGKEDSQSERNV). The VASt domain occupies 326–497 (QGRLYINRVF…DLLMEESVLS (172 aa)). The tract at residues 506–530 (HSSLRRRRRTLNRTAEPVPKLSSQR) is disordered. The span at 507–516 (SSLRRRRRTL) shows a compositional bias: basic residues. A helical membrane pass occupies residues 557–577 (LIVVMSIFLLLLVLLNVTLFL).

As to expression, highly expressed in the liver. Also found in the testis.

The protein localises to the endoplasmic reticulum membrane. The protein resides in the cell membrane. Cholesterol transporter that mediates non-vesicular transport of cholesterol from the plasma membrane (PM) to the endoplasmic reticulum (ER). Contains unique domains for binding cholesterol and the PM, thereby serving as a molecular bridge for the transfer of cholesterol from the PM to the ER. Plays a crucial role in cholesterol homeostasis and has the unique ability to localize to the PM based on the level of membrane cholesterol. In lipid-poor conditions localizes to the ER membrane and in response to excess cholesterol in the PM is recruited to the endoplasmic reticulum-plasma membrane contact sites (EPCS) which is mediated by the GRAM domain. At the EPCS, the sterol-binding VASt/ASTER domain binds to the cholesterol in the PM and facilitates its transfer from the PM to ER. The chain is Protein Aster-C (Gramd1c) from Mus musculus (Mouse).